A 251-amino-acid chain; its full sequence is Hydroxyacylglutathione hydrolase (251 aa).

Zn(2+) contacts are provided by histidine 53, histidine 55, aspartate 57, histidine 58, histidine 109, aspartate 126, and histidine 164.

The protein belongs to the metallo-beta-lactamase superfamily. Glyoxalase II family. Monomer. It depends on Zn(2+) as a cofactor.

The enzyme catalyses an S-(2-hydroxyacyl)glutathione + H2O = a 2-hydroxy carboxylate + glutathione + H(+). The protein operates within secondary metabolite metabolism; methylglyoxal degradation; (R)-lactate from methylglyoxal: step 2/2. In terms of biological role, thiolesterase that catalyzes the hydrolysis of S-D-lactoyl-glutathione to form glutathione and D-lactic acid. In Wigglesworthia glossinidia brevipalpis, this protein is Hydroxyacylglutathione hydrolase.